The primary structure comprises 612 residues: Dihydroxy-acid dehydratase (612 aa).

Position 81 (Asp81) interacts with Mg(2+). Cys122 contributes to the [2Fe-2S] cluster binding site. Mg(2+)-binding residues include Asp123 and Lys124. Position 124 is an N6-carboxylysine (Lys124). Cys193 contributes to the [2Fe-2S] cluster binding site. Glu489 contacts Mg(2+). Ser515 (proton acceptor) is an active-site residue.

It belongs to the IlvD/Edd family. In terms of assembly, homodimer. Requires [2Fe-2S] cluster as cofactor. It depends on Mg(2+) as a cofactor.

It catalyses the reaction (2R)-2,3-dihydroxy-3-methylbutanoate = 3-methyl-2-oxobutanoate + H2O. The enzyme catalyses (2R,3R)-2,3-dihydroxy-3-methylpentanoate = (S)-3-methyl-2-oxopentanoate + H2O. The protein operates within amino-acid biosynthesis; L-isoleucine biosynthesis; L-isoleucine from 2-oxobutanoate: step 3/4. It functions in the pathway amino-acid biosynthesis; L-valine biosynthesis; L-valine from pyruvate: step 3/4. In terms of biological role, functions in the biosynthesis of branched-chain amino acids. Catalyzes the dehydration of (2R,3R)-2,3-dihydroxy-3-methylpentanoate (2,3-dihydroxy-3-methylvalerate) into 2-oxo-3-methylpentanoate (2-oxo-3-methylvalerate) and of (2R)-2,3-dihydroxy-3-methylbutanoate (2,3-dihydroxyisovalerate) into 2-oxo-3-methylbutanoate (2-oxoisovalerate), the penultimate precursor to L-isoleucine and L-valine, respectively. This Teredinibacter turnerae (strain ATCC 39867 / T7901) protein is Dihydroxy-acid dehydratase.